Reading from the N-terminus, the 248-residue chain is MLAIISSAKTLNFEKLAPKTELTIPMFLTLTNKLLSTLQSYSENQLSKIMNISAKLALINKERFKDFDNQESKAAIFTYAGDVFNNIHIEKLTNHALNFLQSHLLIISGLYGVLKPLDTIKPYRLEMATKLNEINLTNFWQDEVTNYINKILAKQENKYLLNLASQEYSSVINPNKLKYQLVNVHFKENRNGKLSRIGINAKKARGAMVKVIANNLIDSPELLKNFSYLGYAFSTKHSSDNELVFIKS.

This sequence belongs to the UPF0246 family.

This chain is UPF0246 protein RC0754, found in Rickettsia conorii (strain ATCC VR-613 / Malish 7).